Reading from the N-terminus, the 223-residue chain is UPF0441 protein YgiB (223 aa).

Residues 201 to 223 form a disordered region; the sequence is ESVAKQSAMQRSAAGTSTRSMGG. The span at 204–223 shows a compositional bias: polar residues; sequence AKQSAMQRSAAGTSTRSMGG.

This sequence belongs to the UPF0441 family.

In Salmonella arizonae (strain ATCC BAA-731 / CDC346-86 / RSK2980), this protein is UPF0441 protein YgiB.